The sequence spans 271 residues: Aquaporin-1 (271 aa).

Over 1-11 (MASEFKKKIFW) the chain is Cytoplasmic. A helical transmembrane segment spans residues 12–29 (RAVVAEFLAMTLFIFISI). Residues 30–48 (GSALGFQYPVRNNQTSGAA) are Extracellular-facing. N-linked (GlcNAc...) asparagine glycosylation occurs at asparagine 42. Residues 49 to 67 (QDNVKVSLAFGLSIATLAQ) traverse the membrane as a helical segment. Residues 68-70 (SVG) lie on the Cytoplasmic side of the membrane. Residues 71–84 (HISGAHLNPAVTLG) lie within the membrane without spanning it. An NPA 1 motif is present at residues 78 to 80 (NPA). At 85–92 (LLLSCQIS) the chain is on the cytoplasmic side. Residues 93–111 (VLRAVMYIIAQCVGAIVAT) form a helical membrane-spanning segment. At 112–135 (AILSGITSSLPGNSLGLNSLAPGV) the chain is on the extracellular side. Residues 136–155 (DSGQGLGIEIIGTLQLVLCV) form a helical membrane-spanning segment. Topologically, residues 156–165 (LATTDRRRRD) are cytoplasmic. A helical membrane pass occupies residues 166–183 (LGGSAPLAIGFSVALGHL). Over 184 to 188 (LAIDY) the chain is Extracellular. The stretch at 189–201 (TGCGINPARSFGS) is an intramembrane region. The short motif at 194–196 (NPA) is the NPA 2 element. Residues 202 to 208 (AVITHNF) are Extracellular-facing. The chain crosses the membrane as a helical span at residues 209 to 226 (QDHWVFWVGPFIGGALAV). The Cytoplasmic portion of the chain corresponds to 227 to 271 (LIYDFILAPRSSDLTDRVKVWTSGQVEEYDLDGDDINSRVEMKPK). Serine 249 is subject to Phosphoserine. Tyrosine 255 is subject to Phosphotyrosine. Serine 264 carries the phosphoserine modification.

It belongs to the MIP/aquaporin (TC 1.A.8) family. As to quaternary structure, homotetramer; each monomer provides an independent water pore. Component of the ankyrin-1 complex in the erythrocyte, composed of ANK1, RHCE, RHAG, SLC4A1, EPB42, GYPA, GYPB and AQP1. Interacts with EPHB2; involved in endolymph production in the inner ear. Identified in a complex with STOM. Interacts (via the N-terminal) with ANK1 (via ANK 1-5 repeats). Interacts (via the C-terminal) with EPB42.

It is found in the cell membrane. The catalysed reaction is H2O(in) = H2O(out). It catalyses the reaction nitric oxide(out) = nitric oxide(in). The enzyme catalyses CO2(out) = CO2(in). It carries out the reaction glycerol(in) = glycerol(out). The catalysed reaction is H2O2(out) = H2O2(in). It catalyses the reaction K(+)(in) = K(+)(out). The enzyme catalyses Na(+)(in) = Na(+)(out). Functionally, forms a water channel that facilitates the transport of water across cell membranes, playing a crucial role in water homeostasis in various tissues. Could also be permeable to small solutes including hydrogen peroxide, glycerol and gases such as amonnia (NH3), nitric oxide (NO) and carbon dioxide (CO2). Recruited to the ankyrin-1 complex, a multiprotein complex of the erythrocyte membrane, it could be part of a CO2 metabolon, linking facilitated diffusion of CO2 across the membrane, anion exchange of Cl(-)/HCO3(-) and interconversion of dissolved CO2 and carbonic acid in the cytosol. In vitro, it shows non-selective gated cation channel activity and may be permeable to cations like K(+) and Na(+) in vivo. This is Aquaporin-1 from Sus scrofa (Pig).